We begin with the raw amino-acid sequence, 125 residues long: Large ribosomal subunit protein bL12 (125 aa).

The segment at Ala95–Lys125 is disordered.

Belongs to the bacterial ribosomal protein bL12 family. Homodimer. Part of the ribosomal stalk of the 50S ribosomal subunit. Forms a multimeric L10(L12)X complex, where L10 forms an elongated spine to which 2 to 4 L12 dimers bind in a sequential fashion. Binds GTP-bound translation factors.

Its function is as follows. Forms part of the ribosomal stalk which helps the ribosome interact with GTP-bound translation factors. Is thus essential for accurate translation. The chain is Large ribosomal subunit protein bL12 from Polynucleobacter necessarius subsp. necessarius (strain STIR1).